A 632-amino-acid chain; its full sequence is Probable potassium transport system protein Kup 2 (632 aa).

The next 12 membrane-spanning stretches (helical) occupy residues 19-39 (FWGL…TSPL), 58-78 (MIVL…VTAK), 110-130 (MFLM…SMIT), 147-167 (PALE…LFAV), 178-198 (AFGP…IVHI), 216-236 (FLLS…LAVT), 257-277 (WLFF…ALVL), 290-310 (MVPE…TVIA), 347-367 (IYLP…VLLF), 377-397 (YGIA…VVIW), 404-424 (AAVA…FFSA), and 429-449 (LFEG…TIWT).

It belongs to the HAK/KUP transporter (TC 2.A.72) family.

It localises to the cell inner membrane. It catalyses the reaction K(+)(in) + H(+)(in) = K(+)(out) + H(+)(out). In terms of biological role, transport of potassium into the cell. Likely operates as a K(+):H(+) symporter. The chain is Probable potassium transport system protein Kup 2 from Bradyrhizobium sp. (strain BTAi1 / ATCC BAA-1182).